We begin with the raw amino-acid sequence, 390 residues long: Protein AC109 (390 aa).

The protein localises to the host cytoplasm. The protein resides in the host nucleus. In terms of biological role, plays a role in the transport of the budded virion (BV) to the host nucleus and for occlusion of viral progeny. This Lepidoptera (butterflies and moths) protein is Protein AC109 (ORF109).